Consider the following 279-residue polypeptide: Pantothenate synthetase (279 aa).

Position 30–37 (30–37) interacts with ATP; sequence MGALHAGH. The active-site Proton donor is H37. Residue Q61 participates in (R)-pantoate binding. Q61 is a beta-alanine binding site. 147–150 contributes to the ATP binding site; it reads GEKD. Position 153 (Q153) interacts with (R)-pantoate. ATP contacts are provided by residues A176 and 184–187; that span reads LSSR.

The protein belongs to the pantothenate synthetase family. In terms of assembly, homodimer.

It is found in the cytoplasm. It catalyses the reaction (R)-pantoate + beta-alanine + ATP = (R)-pantothenate + AMP + diphosphate + H(+). Its pathway is cofactor biosynthesis; (R)-pantothenate biosynthesis; (R)-pantothenate from (R)-pantoate and beta-alanine: step 1/1. Its function is as follows. Catalyzes the condensation of pantoate with beta-alanine in an ATP-dependent reaction via a pantoyl-adenylate intermediate. The polypeptide is Pantothenate synthetase (Sphingopyxis alaskensis (strain DSM 13593 / LMG 18877 / RB2256) (Sphingomonas alaskensis)).